The chain runs to 781 residues: MHTWKMWAICTALAAHLPEEQALRQACLSCDATQSCNCSFMGLDFIPPGLTGKITVLNLAHNRIKVIRTHDLQKAVNLRTLLLQSNQISSIDEDSFGSQGKLELLDLSNNSLAHLSPVWFGPLFSLQHLRIQGNSYSDLGESSPFSSLRNLSSLHLGNPQFSIIRQGNFEGIVFLNTLRIDGDNLSQYEPGSLKSIRKINHMIISIRRIDVFSAVIRDLLHSAIWLDVRKLAFSVPEKIQLLRIMSSSFAKKISLKQCLFTDATVPEIVSILEGMPKLMEVEMKDCTLLGTGKWYKQIHANQSQSLRILTIENLSIEEFYLFTDLQSVLDLLSLFRKVTVENTKVFLVPCKLSQHLLSLEYLDLSANLLGDQSLEHSACQGAWPSLQTLNLSQNSLSDLKMTGKSLFHLRNLNLLDISENNFGEIPDMCEWPENLKYLNLSSTQIPKLTTCIPSTLEVLDVSANNLQDFGLQLPFLKELYLTKNHLKTLPEATDIPNLVAMSISRNKLNSFSKEEFESFKQMELLDASANNFICSCEFLSFIHHEAGIAQVLVGWPESYICDSPLTVRGAQVGSVQLSLMECHRSLLVSLICTLVFLFILILVVVGYKYHAVWYMRMTWAWLQAKRKPKRAPTKDICYDAFVSYSENDSNWVENIMVQQLEQACPPFRLCLHKRDFVPGKWIVDNIIDSIEKSHKTLFVLSEHFVQSEWCKYELDFSHFRLFDENNDVAILILLEPIQSQAIPKRFCKLRKIMNTKTYLEWPPDEEQQQMFWENLKAALKS.

An N-terminal signal peptide occupies residues 1–24 (MHTWKMWAICTALAAHLPEEQALR). At 25–585 (QACLSCDATQ…QLSLMECHRS (561 aa)) the chain is on the extracellular side. A disulfide bond links Cys-30 and Cys-36. A glycan (N-linked (GlcNAc...) asparagine) is linked at Asn-37. 6 LRR repeats span residues 53–74 (KITV…DLQK), 77–98 (NLRT…SFGS), 101–122 (KLEL…WFGP), 125–146 (SLQH…SPFS), 150–171 (NLSS…NFEG), and 174–195 (FLNT…SLKS). A glycan (N-linked (GlcNAc...) asparagine) is linked at Asn-109. 4 N-linked (GlcNAc...) asparagine glycosylation sites follow: Asn-150, Asn-184, Asn-301, and Asn-313. Cys-350 and Cys-379 form a disulfide bridge. LRR repeat units lie at residues 358–378 (SLEY…EHSA), 385–406 (SLQT…GKSL), 411–432 (NLNL…CEWP), 434–455 (NLKY…IPST), 456–474 (LEVL…LQLP), 475–496 (FLKE…TDIP), and 497–518 (NLVA…EFES). A glycan (N-linked (GlcNAc...) asparagine) is linked at Asn-390. The cysteines at positions 429 and 451 are disulfide-linked. N-linked (GlcNAc...) asparagine glycosylation is present at Asn-439. Residues 530 to 584 (NNFICSCEFLSFIHHEAGIAQVLVGWPESYICDSPLTVRGAQVGSVQLSLMECHR) form the LRRCT domain. Residues 586–606 (LLVSLICTLVFLFILILVVVG) traverse the membrane as a helical segment. Residues 607–781 (YKYHAVWYMR…WENLKAALKS (175 aa)) lie on the Cytoplasmic side of the membrane. Residues 636–779 (ICYDAFVSYS…MFWENLKAAL (144 aa)) form the TIR domain.

This sequence belongs to the Toll-like receptor family. As to quaternary structure, binds MYD88 (via TIR domain). N-glycosylated. Highly expressed in ovary. Also detected in brain, heart, lung, liver, spleen and kidney, and at low levels in gizzard, muscle, testis and proventriculus.

The protein localises to the membrane. In terms of biological role, participates in the innate immune response to microbial agents. Acts via MYD88 and TRAF6, leading to NF-kappa-B activation, cytokine secretion and the inflammatory response. Mediates the response to mycoplasmal macrophage-activating lipopeptide-2kD (MALP-2). In Gallus gallus (Chicken), this protein is Toll-like receptor 2 type-2 (TLR2-2).